Consider the following 373-residue polypeptide: Cobalt-precorrin-5B C(1)-methyltransferase (373 aa).

It belongs to the CbiD family.

It carries out the reaction Co-precorrin-5B + S-adenosyl-L-methionine = Co-precorrin-6A + S-adenosyl-L-homocysteine. The protein operates within cofactor biosynthesis; adenosylcobalamin biosynthesis; cob(II)yrinate a,c-diamide from sirohydrochlorin (anaerobic route): step 6/10. In terms of biological role, catalyzes the methylation of C-1 in cobalt-precorrin-5B to form cobalt-precorrin-6A. The sequence is that of Cobalt-precorrin-5B C(1)-methyltransferase from Listeria monocytogenes serotype 4a (strain HCC23).